Consider the following 316-residue polypeptide: Conjugated bile acid hydrolase (316 aa).

Residue C2 is the Nucleophile of the active site. Positions 2 and 18 each coordinate deoxycholate. N81 contributes to the taurine binding site.

The protein belongs to the peptidase C59 family.

It carries out the reaction cholate + taurine = taurocholate + H2O. The catalysed reaction is taurochenodeoxycholate + H2O = chenodeoxycholate + taurine. The enzyme catalyses taurodeoxycholate + H2O = deoxycholate + taurine. It catalyses the reaction glycocholate + H2O = cholate + glycine. It carries out the reaction glycodeoxycholate + H2O = deoxycholate + glycine. It participates in lipid metabolism; bile acid biosynthesis. Its function is as follows. Bile salt hydrolase that catalyzes the deconjugation of glycine- and taurine-linked bile salts, which occurs naturally in the intestines of humans, releasing amino acid residues and deconjugated bile salts (bile acids). Can hydrolyze the amide bond in the bile salts taurocholate (TCA), taurodeoxycholate (TDCA), taurochenodeoxycholate (TCDCA), glycocholate (GCA) and glycodeoxycholate (GDCA). Shows highest activity toward the taurine-conjugated bile salts TCA and TCDCA. The activity toward the other three substrates (TDCA, GCA and GDCA) is relatively low. This enzyme likely contributes to bile salt resistance of the strain and may be associated with survival capability of strain JCM1131 within the human intestine by bile detoxification. The sequence is that of Conjugated bile acid hydrolase from Lactobacillus gasseri (strain ATCC 33323 / DSM 20243 / BCRC 14619 / CIP 102991 / JCM 1131 / KCTC 3163 / NCIMB 11718 / NCTC 13722 / AM63).